The primary structure comprises 117 residues: MSNQELLQLAVNAVDDKKAEQVVALNMKGISLIADFFLICHGNSEKQVQAIAHELKKVAQEQGIEIKRLEGYEQARWVLIDLGDVVVHVFHKDERAYYNLEKLWGDAPTVELEGVIS.

Belongs to the Iojap/RsfS family. In terms of assembly, interacts with ribosomal protein uL14 (rplN).

The protein resides in the cytoplasm. Functionally, functions as a ribosomal silencing factor. Interacts with ribosomal protein uL14 (rplN), blocking formation of intersubunit bridge B8. Prevents association of the 30S and 50S ribosomal subunits and the formation of functional ribosomes, thus repressing translation. The protein is Ribosomal silencing factor RsfS of Halalkalibacterium halodurans (strain ATCC BAA-125 / DSM 18197 / FERM 7344 / JCM 9153 / C-125) (Bacillus halodurans).